Reading from the N-terminus, the 1012-residue chain is Ubiquitin-activating enzyme E1 1 (1012 aa).

Residue R22 participates in ATP binding. S264 is subject to Phosphoserine. Residues A437 and D463 each contribute to the ATP site. Mg(2+)-binding residues include D465 and E468. 6 residues coordinate ATP: N471, R474, K487, V513, D537, and N538. D537 contacts Mg(2+). K588 is covalently cross-linked (Glycyl lysine isopeptide (Lys-Gly) (interchain with G-Cter in ubiquitin)). C593 acts as the Glycyl thioester intermediate in catalysis. S903 bears the Phosphoserine mark.

It belongs to the ubiquitin-activating E1 family. Monomer. Interacts with the E2 ubiquitin-conjugating enzyme ubc4.

Its subcellular location is the cytoplasm. It is found in the nucleus. The catalysed reaction is ATP + ubiquitin + [E1 ubiquitin-activating enzyme]-L-cysteine = AMP + diphosphate + S-ubiquitinyl-[E1 ubiquitin-activating enzyme]-L-cysteine.. The protein operates within protein modification; protein ubiquitination. With respect to regulation, ubiquitin transfer between the E1 ubiquitin-activating enzyme ptr3 and E2 ubiquitin-conjugating enzyme ubc4 is enhanced by the presence of magnesium and ATP, or adenylated ubiquitin. Functionally, E1 ubiquitin-activating enzyme that catalyzes the first step in ubiquitin conjugation to mark cellular proteins for degradation through the ubiquitin-proteasome system. Activates ubiquitin by first adenylating its C-terminal glycine residue with ATP, and thereafter linking this residue to the side chain of a cysteine residue in E1, yielding a ubiquitin-E1 thioester and free AMP. The sequence is that of Ubiquitin-activating enzyme E1 1 (ptr3) from Schizosaccharomyces pombe (strain 972 / ATCC 24843) (Fission yeast).